The primary structure comprises 938 residues: Catenin delta-1 (938 aa).

The residue at position 1 (Met1) is an N-acetylmethionine. The segment at 1–357 is necessary and sufficient for interaction with CCDC85B; sequence MDDSEVESTA…ASLDSLRKGM (357 aa). Phosphoserine is present on Ser4. A coiled-coil region spans residues 10-46; sequence ASILASVKEQEAQFEKLTRALEEERRHVSAQLERVRV. At Ser47 the chain carries Phosphoserine. Phosphothreonine is present on Thr59. Phosphotyrosine; by FYN is present on Tyr112. At Ser125 the chain carries Phosphoserine. 2 positions are modified to phosphotyrosine: Tyr217 and Tyr221. The residue at position 225 (Ser225) is a Phosphoserine. Tyr228 carries the post-translational modification Phosphotyrosine. Residues Ser230 and Ser252 each carry the phosphoserine modification. Residue Tyr257 is modified to Phosphotyrosine. Residues Ser268 and Ser269 each carry the phosphoserine modification. Tyr280 carries the post-translational modification Phosphotyrosine. Ser288 is modified (phosphoserine). Position 291 is a phosphotyrosine (Tyr291). Ser300 is modified (phosphoserine). A Phosphothreonine modification is found at Thr304. 4 positions are modified to phosphoserine: Ser320, Ser346, Ser349, and Ser352. 4 ARM repeats span residues 358–395, 398–437, 441–475, and 476–516; these read PPPSNWRQPELPEVIAMLGFRLDAVKSNAAAYLQHLCY, DKVKTDVRKLKGIPILVGLLDHPKKEVHLGACGALKNISF, QDNKIAIKNCDGVPALVRLLRKARDMDLTEVITGT, and LWNL…NEDC. Lys421 participates in a covalent cross-link: Glycyl lysine isopeptide (Lys-Gly) (interchain with G-Cter in SUMO2). A Glycyl lysine isopeptide (Lys-Gly) (interchain with G-Cter in SUMO2) cross-link involves residue Lys517. ARM repeat units follow at residues 534-573, 583-624, 653-693, 700-739, 740-780, and 781-826; these read LRNVSSERSEARRKLRECDGLVDALIFIVQAEIGQKDSDS, LRNL…AKKG, ARGY…NLCA, RYIRSALRQEKALSAIAELLTSEHERVVKAASGALRNLAV, DARN…SILN, and TINE…ALVL. The residue at position 617 (Ser617) is a Phosphoserine. The short motif at 622 to 629 is the Nuclear localization signal (NLS) element; it reads KKGKDEWF. The residue at position 713 (Ser713) is a Phosphoserine. A phosphoserine mark is found at Ser811, Ser847, Ser857, Ser859, Ser861, and Ser864. Residues 855–938 are disordered; it reads NASRSQSSHS…LKGAPLMQKI (84 aa). The residue at position 865 (Tyr865) is a Phosphotyrosine. Phosphoserine is present on Ser868. Thr869 carries the phosphothreonine modification. The span at 875–888 shows a compositional bias: basic and acidic residues; that stretch reads RNQKSDKKPDREEI. Phosphoserine is present on Ser879. Lys882 participates in a covalent cross-link: Glycyl lysine isopeptide (Lys-Gly) (interchain with G-Cter in SUMO2). The segment covering 892-908 has biased composition (polar residues); sequence NMGSNTKSLDNNYSTLN. The residue at position 899 (Ser899) is a Phosphoserine. Position 904 is a phosphotyrosine (Tyr904). Phosphothreonine is present on residues Thr906 and Thr916. The span at 909–922 shows a compositional bias: basic and acidic residues; the sequence is ERGDHNRTLDRSGD. The residue at position 920 (Ser920) is a Phosphoserine.

Belongs to the beta-catenin family. Belongs to a multiprotein cell-cell adhesion complex that also contains E-cadherin/CDH1, alpha-catenin/CTNNA1, beta-catenin/CTNNB1, and gamma-catenin/JUP. Binds to the C-terminal fragment of PSEN1 and mutually competes for CDH1. Interacts with ZBTB33. Interacts with GLIS2. Interacts with FER. Interacts with NANOS1 (via N-terminal region). Interacts (via N-terminus) with GNA12; the interaction regulates CDH1-mediated cell-cell adhesion. Interacts with GNA13. Component of a cadherin:catenin adhesion complex composed of at least of CDH26, beta-catenin/CTNNB1, alpha-catenin/CTNNA1 and p120 catenin/CTNND1. Interacts with CCDC85B. Interacts with PLPP3; negatively regulates the PLPP3-mediated stabilization of CTNNB1. Interacts with DSG3; the interaction facilitates DSG3 localization and retention at cell-cell junctions. Interacts with CTNND1/p120-catenin; the interaction controls CADH5 endocytosis. In terms of processing, phosphorylated by FER and other protein-tyrosine kinases. Phosphorylated at Ser-288 by PAK5. Dephosphorylated by PTPRJ. Expressed in basal keratinocytes (at protein level).

It is found in the cell junction. The protein localises to the adherens junction. Its subcellular location is the cytoplasm. The protein resides in the nucleus. It localises to the cell membrane. In terms of biological role, key regulator of cell-cell adhesion that associates with and regulates the cell adhesion properties of both C-, E- and N-cadherins, being critical for their surface stability. Promotes localization and retention of DSG3 at cell-cell junctions, via its interaction with DSG3. Beside cell-cell adhesion, regulates gene transcription through several transcription factors including ZBTB33/Kaiso2 and GLIS2, and the activity of Rho family GTPases and downstream cytoskeletal dynamics. Implicated both in cell transformation by SRC and in ligand-induced receptor signaling through the EGF, PDGF, CSF-1 and ERBB2 receptors. The protein is Catenin delta-1 (Ctnnd1) of Mus musculus (Mouse).